Reading from the N-terminus, the 215-residue chain is Cytochrome b6 (215 aa).

A helical membrane pass occupies residues 32 to 52; it reads IFYCLGGITLTCFLVQVATGF. Cys35 provides a ligand contact to heme c. His86 and His100 together coordinate heme b. A run of 3 helical transmembrane segments spans residues 90 to 110, 116 to 136, and 186 to 206; these read ASMMVLMMILHVFRVYLTGGF, LTWVTGVVLGVLTASFGVTGY, and LHTFVLPLLTAVFMLMHFPMI. Residues His187 and His202 each contribute to the heme b site.

This sequence belongs to the cytochrome b family. PetB subfamily. As to quaternary structure, the 4 large subunits of the cytochrome b6-f complex are cytochrome b6, subunit IV (17 kDa polypeptide, PetD), cytochrome f and the Rieske protein, while the 4 small subunits are PetG, PetL, PetM and PetN. The complex functions as a dimer. It depends on heme b as a cofactor. Requires heme c as cofactor.

The protein resides in the plastid. It is found in the chloroplast thylakoid membrane. In terms of biological role, component of the cytochrome b6-f complex, which mediates electron transfer between photosystem II (PSII) and photosystem I (PSI), cyclic electron flow around PSI, and state transitions. The polypeptide is Cytochrome b6 (Populus alba (White poplar)).